Reading from the N-terminus, the 151-residue chain is U1 small nuclear ribonucleoprotein C (151 aa).

The segment at 4-36 (FYCEYCSIYLTHSSPAGRKQHSQGRKHISAKVE) adopts a Matrin-type zinc-finger fold.

Belongs to the U1 small nuclear ribonucleoprotein C family. In terms of assembly, U1 snRNP is composed of the 7 core Sm proteins B/B', D1, D2, D3, E, F and G that assemble in a heptameric protein ring on the Sm site of the small nuclear RNA to form the core snRNP, and at least 3 U1 snRNP-specific proteins U1-70K, U1-A and U1-C. U1-C interacts with U1 snRNA and the 5' splice-site region of the pre-mRNA.

It is found in the nucleus. Functionally, component of the spliceosomal U1 snRNP, which is essential for recognition of the pre-mRNA 5' splice-site and the subsequent assembly of the spliceosome. U1-C is directly involved in initial 5' splice-site recognition for both constitutive and regulated alternative splicing. The interaction with the 5' splice-site seems to precede base-pairing between the pre-mRNA and the U1 snRNA. Stimulates commitment or early (E) complex formation by stabilizing the base pairing of the 5' end of the U1 snRNA and the 5' splice-site region. This Theileria annulata protein is U1 small nuclear ribonucleoprotein C.